We begin with the raw amino-acid sequence, 576 residues long: MAGUK p55 subfamily member 7 (576 aa).

L27 domains are found at residues 10–64 (CDMG…EKQN) and 65–122 (PLPI…YDPV). In terms of domain architecture, PDZ spans 139-220 (IIRLVKNSEP…AITFKIIPST (82 aa)). Positions 228-298 (EGKIFIKALF…PSKHFQERRL (71 aa)) constitute an SH3 domain. The tract at residues 289-383 (PSKHFQERRL…VGPVGVGLNE (95 aa)) is phospho-regulated basic and hydrophobic (PRBH) motif. In terms of domain architecture, Guanylate kinase-like spans 368–560 (YRLIVLVGPV…AFNELKTTFD (193 aa)). Position 409 is a phosphoserine (S409).

This sequence belongs to the MAGUK family. In terms of assembly, heterodimer; able to heterodimerize via its C-terminal L27 domain with LIN7A, LIN7B and LIN7C. Forms a tripartite complex composed of DLG1, MPP7 and LIN7 (LIN7A or LIN7C). Interacts with DLG1 via its N-terminal L27 domain. Interacts with PALS1 and PATJ. Phosphorylated by aPKC which promotes dissociation from the cell cortex.

The protein localises to the membrane. Its subcellular location is the lateral cell membrane. The protein resides in the cell junction. It is found in the tight junction. It localises to the adherens junction. The protein localises to the cytoplasm. Its subcellular location is the cell cortex. Acts as an important adapter that promotes epithelial cell polarity and tight junction formation via its interaction with DLG1. Involved in the assembly of protein complexes at sites of cell-cell contact. This is MAGUK p55 subfamily member 7 (Mpp7) from Mus musculus (Mouse).